Consider the following 324-residue polypeptide: Phosphomevalonate decarboxylase (324 aa).

Belongs to the phosphomevalonate decarboxylase family.

It carries out the reaction (R)-5-phosphomevalonate + ATP = isopentenyl phosphate + ADP + phosphate + CO2. With respect to regulation, is strongly inhibited by 6-fluoromevalonate monophosphate but shows negligible inhibition by 6-fluoromevalonate diphosphate (a potent inhibitor of the classical mevalonate pathway). Functionally, catalyzes the decarboxylation of mevalonate 5-phosphate (MVAP) to isopentenyl phosphate (IP). Functions in an alternate mevalonate (MVA) pathway leading to isopentenyl diphosphate (IPP), a key precursor for the biosynthesis of isoprenoid compounds such as archaeal membrane lipids. This is Phosphomevalonate decarboxylase (mvaD) from Haloferax volcanii (strain ATCC 29605 / DSM 3757 / JCM 8879 / NBRC 14742 / NCIMB 2012 / VKM B-1768 / DS2) (Halobacterium volcanii).